Reading from the N-terminus, the 670-residue chain is tRNA 5-methylaminomethyl-2-thiouridine biosynthesis bifunctional protein MnmC (670 aa).

A tRNA (mnm(5)s(2)U34)-methyltransferase region spans residues 1–242; it reads MTFSVQHAEI…KRECLSGLKI (242 aa). Residues 269-670 form an FAD-dependent cmnm(5)s(2)U34 oxidoreductase region; it reads IGGGIASLCA…KKWLKGSKVE (402 aa).

This sequence in the N-terminal section; belongs to the methyltransferase superfamily. tRNA (mnm(5)s(2)U34)-methyltransferase family. In the C-terminal section; belongs to the DAO family. It depends on FAD as a cofactor.

The protein localises to the cytoplasm. It catalyses the reaction 5-aminomethyl-2-thiouridine(34) in tRNA + S-adenosyl-L-methionine = 5-methylaminomethyl-2-thiouridine(34) in tRNA + S-adenosyl-L-homocysteine + H(+). In terms of biological role, catalyzes the last two steps in the biosynthesis of 5-methylaminomethyl-2-thiouridine (mnm(5)s(2)U) at the wobble position (U34) in tRNA. Catalyzes the FAD-dependent demodification of cmnm(5)s(2)U34 to nm(5)s(2)U34, followed by the transfer of a methyl group from S-adenosyl-L-methionine to nm(5)s(2)U34, to form mnm(5)s(2)U34. This Haemophilus influenzae (strain ATCC 51907 / DSM 11121 / KW20 / Rd) protein is tRNA 5-methylaminomethyl-2-thiouridine biosynthesis bifunctional protein MnmC.